We begin with the raw amino-acid sequence, 259 residues long: Eukaryotic translation initiation factor 3 subunit J (259 aa).

The segment at 1 to 70 (MAAAAAAAAG…KEEAEVKPEV (70 aa)) is sufficient for interaction with EIF3B. Positions 1 to 111 (MAAAAAAAAG…EPEESKVLTP (111 aa)) are disordered. Residues Ser12, Ser14, and Ser21 each carry the phosphoserine modification. Residues 41–62 (EGEDEDEDVKDNWDDDDDENKE) show a composition bias toward acidic residues. Residues 63 to 107 (EAEVKPEVKISEKKKIAEKIKEKERQQKKRQEEIKKRLEEPEESK) are compositionally biased toward basic and acidic residues. Residues 71–136 (KISEKKKIAE…ESDLELAKET (66 aa)) adopt a coiled-coil conformation. Lys107 is covalently cross-linked (Glycyl lysine isopeptide (Lys-Gly) (interchain with G-Cter in SUMO2)). A Phosphothreonine modification is found at Thr110. Ser128 bears the Phosphoserine mark. Positions 218–247 (SKAKKKKKGVVPGGGLKATMKDDLADYGGY) are disordered. Positions 244-259 (YGGYDGGYVQDYEDFM) are promotes stable association with the 40S ribosome. The residue at position 255 (Tyr255) is a Phosphotyrosine.

It belongs to the eIF-3 subunit J family. As to quaternary structure, component of the eukaryotic translation initiation factor 3 (eIF-3) complex, which is composed of 13 subunits: EIF3A, EIF3B, EIF3C, EIF3D, EIF3E, EIF3F, EIF3G, EIF3H, EIF3I, EIF3J, EIF3K, EIF3L and EIF3M. The eIF-3 complex appears to include 3 stable modules: module A is composed of EIF3A, EIF3B, EIF3G and EIF3I; module B is composed of EIF3F, EIF3H, and EIF3M; and module C is composed of EIF3C, EIF3D, EIF3E, EIF3K and EIF3L. EIF3C of module C binds EIF3B of module A and EIF3H of module B, thereby linking the three modules. EIF3J is a labile subunit that binds to the eIF-3 complex via EIF3B. The eIF-3 complex interacts with RPS6KB1 under conditions of nutrient depletion. Mitogenic stimulation leads to binding and activation of a complex composed of MTOR and RPTOR, leading to phosphorylation and release of RPS6KB1 and binding of EIF4B to eIF-3. In terms of processing, phosphorylated. Phosphorylation is enhanced upon serum stimulation.

It is found in the cytoplasm. Functionally, component of the eukaryotic translation initiation factor 3 (eIF-3) complex, which is required for several steps in the initiation of protein synthesis. The eIF-3 complex associates with the 40S ribosome and facilitates the recruitment of eIF-1, eIF-1A, eIF-2:GTP:methionyl-tRNAi and eIF-5 to form the 43S pre-initiation complex (43S PIC). The eIF-3 complex stimulates mRNA recruitment to the 43S PIC and scanning of the mRNA for AUG recognition. The eIF-3 complex is also required for disassembly and recycling of post-termination ribosomal complexes and subsequently prevents premature joining of the 40S and 60S ribosomal subunits prior to initiation. The eIF-3 complex specifically targets and initiates translation of a subset of mRNAs involved in cell proliferation, including cell cycling, differentiation and apoptosis, and uses different modes of RNA stem-loop binding to exert either translational activation or repression. This subunit binds directly within the mRNA entry channel of the 40S ribosome to the aminoacyl (A) site. It may regulate the interaction between the 43S PIC and mRNA. This chain is Eukaryotic translation initiation factor 3 subunit J (Eif3j), found in Rattus norvegicus (Rat).